The following is a 329-amino-acid chain: Beta-ketoacyl-[acyl-carrier-protein] synthase III (329 aa).

Residues Cys-123 and His-256 contribute to the active site. An ACP-binding region spans residues 257–261 (QANIR). Asn-286 is a catalytic residue.

This sequence belongs to the thiolase-like superfamily. FabH family. As to quaternary structure, homodimer.

The protein resides in the cytoplasm. The enzyme catalyses malonyl-[ACP] + acetyl-CoA + H(+) = 3-oxobutanoyl-[ACP] + CO2 + CoA. Its pathway is lipid metabolism; fatty acid biosynthesis. Catalyzes the condensation reaction of fatty acid synthesis by the addition to an acyl acceptor of two carbons from malonyl-ACP. Catalyzes the first condensation reaction which initiates fatty acid synthesis and may therefore play a role in governing the total rate of fatty acid production. Possesses both acetoacetyl-ACP synthase and acetyl transacylase activities. Its substrate specificity determines the biosynthesis of branched-chain and/or straight-chain of fatty acids. This chain is Beta-ketoacyl-[acyl-carrier-protein] synthase III, found in Burkholderia lata (strain ATCC 17760 / DSM 23089 / LMG 22485 / NCIMB 9086 / R18194 / 383).